Consider the following 172-residue polypeptide: Monopolar attachment protein 1 (172 aa).

Residues 15-30 (KKNKNPKISNSKKKNS) show a composition bias toward basic residues. The tract at residues 15 to 43 (KKNKNPKISNSKKKNSTRPALQDKTNQTL) is disordered. Residues 31-43 (TRPALQDKTNQTL) show a composition bias toward polar residues. A POLO box domain (PBD)-binding motif is present at residues 100-102 (STP).

As to quaternary structure, interacts with rec8, Interacts with plo1.

It localises to the nucleus. It is found in the chromosome. The protein resides in the centromere. Its subcellular location is the kinetochore. Plays an important role in chromosome segregation during meiosis I by allowing meiotic rec8 to establish cohesion at the centromeric central core and thereby promote the side-by-side structure of kinetochores at meiosis I. Enables monopolar attachment during meiosis I. Required to facilitate kinetochore mono-orientation during meiosis I, when kinetochores on sister chromosomes face the same direction and are thus captured and pulled by spindle fibers from the same pole. Acts in collaboration with plo1. The protein is Monopolar attachment protein 1 (moa1) of Schizosaccharomyces pombe (strain 972 / ATCC 24843) (Fission yeast).